Consider the following 276-residue polypeptide: 2-dehydro-3-deoxyphosphooctonate aldolase (276 aa).

The protein belongs to the KdsA family.

Its subcellular location is the cytoplasm. It carries out the reaction D-arabinose 5-phosphate + phosphoenolpyruvate + H2O = 3-deoxy-alpha-D-manno-2-octulosonate-8-phosphate + phosphate. Its pathway is carbohydrate biosynthesis; 3-deoxy-D-manno-octulosonate biosynthesis; 3-deoxy-D-manno-octulosonate from D-ribulose 5-phosphate: step 2/3. It functions in the pathway bacterial outer membrane biogenesis; lipopolysaccharide biosynthesis. This Helicobacter pylori (strain Shi470) protein is 2-dehydro-3-deoxyphosphooctonate aldolase.